The primary structure comprises 251 residues: Thiamine thiazole synthase (251 aa).

Residues S34, 53–54 (EK), G61, V125, and 151–153 (HVD) each bind NAD(+). Fe cation-binding residues include D153 and H168. M216 provides a ligand contact to NAD(+). R226 is a glycine binding site.

Belongs to the THI4 family. As to quaternary structure, homooctamer; tetramer of dimers. Fe(2+) serves as cofactor.

It carries out the reaction hydrogen sulfide + glycine + NAD(+) = ADP-5-ethyl-4-methylthiazole-2-carboxylate + nicotinamide + 3 H2O + H(+). It functions in the pathway cofactor biosynthesis; thiamine diphosphate biosynthesis. In terms of biological role, involved in the biosynthesis of the thiazole moiety of thiamine. Catalyzes the conversion of NAD and glycine to adenosine diphosphate 5-(2-hydroxyethyl)-4-methylthiazole-2-carboxylate (ADT), an adenylated thiazole intermediate, using free sulfide as a source of sulfur. The chain is Thiamine thiazole synthase from Thermococcus kodakarensis (strain ATCC BAA-918 / JCM 12380 / KOD1) (Pyrococcus kodakaraensis (strain KOD1)).